Reading from the N-terminus, the 500-residue chain is Protein shisa-6 (500 aa).

The signal sequence occupies residues 1–25; the sequence is MALRRLLLLLLLSLESLDLLPSVHG. Over 26–174 the chain is Extracellular; sequence ARGRAANRTL…NKYDPEKDKT (149 aa). N-linked (GlcNAc...) asparagine glycosylation is found at Asn-32 and Asn-59. Residues 52–73 form a disordered region; sequence ARGGRELNGTARAPGIPEAGSR. Residues 175-195 form a helical membrane-spanning segment; it reads NFTVYITCGVIAFVIVAGVFA. Topologically, residues 196 to 500 are cytoplasmic; that stretch reads KVSYDKAHRP…YTASKTEVTV (305 aa). Polar residues predominate over residues 240 to 255; sequence TSPKENTPVRSSSKNH. 2 disordered regions span residues 240–269 and 349–378; these read TSPK…PEKP and SQQK…DRGL. A phosphoserine mark is found at Ser-391, Ser-397, and Ser-409. The residue at position 433 (Thr-433) is a Phosphothreonine. The segment at 444–470 is disordered; that stretch reads MHSHPSASNNSYATLGQSQTAAKRHAF. Positions 448-464 are enriched in polar residues; it reads PSASNNSYATLGQSQTA. Thr-477 bears the Phosphothreonine mark. The PDZ-binding motif lies at 497-500; sequence EVTV.

The protein belongs to the shisa family. Component of the postsynaptic hippocampal AMPA-type glutamate receptor (AMPAR) complex, at least composed of pore forming AMPAR subunits GRIA1, GRIA2 and GRIA3 and AMPAR auxiliary proteins SHISA6 and SHISA7. Interacts (via PDZ-binding motif) with DLG4/PSD-95 (via PDZ domain); the interaction is direct. Expressed in the developing ventral mesencephalon.

It localises to the membrane. The protein resides in the postsynaptic density. Involved in maintenance of high-frequency synaptic transmission at hippocampal CA3-CA1 synapses. Regulates AMPA-type glutamate receptor (AMPAR) immobilization at postsynaptic density keeping the channels in an activated state in the presence of glutamate and preventing synaptic depression. May play a role in self-renewal and differentiation of spermatogonial stem cells by inhibiting canonical Wnt signaling pathway. This chain is Protein shisa-6, found in Homo sapiens (Human).